A 278-amino-acid polypeptide reads, in one-letter code: Probable cytochrome c oxidase subunit 3 (278 aa).

A run of 6 helical transmembrane segments spans residues 21 to 41 (PWPI…ISSM), 46 to 66 (FNMY…YSWW), 89 to 109 (IGMV…FASF), 174 to 194 (CVTA…MQVY), 212 to 232 (FYLA…FLIV), and 256 to 276 (AWYW…VYIL).

The protein belongs to the cytochrome c oxidase subunit 3 family.

The protein resides in the cell membrane. The catalysed reaction is 4 Fe(II)-[cytochrome c] + O2 + 8 H(+)(in) = 4 Fe(III)-[cytochrome c] + 2 H2O + 4 H(+)(out). This is Probable cytochrome c oxidase subunit 3 (ctaE) from Rickettsia prowazekii (strain Madrid E).